A 643-amino-acid polypeptide reads, in one-letter code: Pesticidal crystal protein Cry11Aa (643 aa).

It belongs to the delta endotoxin family.

In terms of biological role, promotes colloidosmotic lysis by binding to the midgut epithelial cells of mosquitos. The protein is Pesticidal crystal protein Cry11Aa (cry11Aa) of Bacillus thuringiensis subsp. israelensis.